We begin with the raw amino-acid sequence, 214 residues long: Adenylate kinase (214 aa).

Residue 10–15 coordinates ATP; sequence GAGKGT. The segment at 30–59 is NMP; it reads STGDMLRAAIKAGTELGNAAKRVMDEGKLV. AMP-binding positions include threonine 31, arginine 36, 57–59, 85–88, and glutamine 92; these read KLV and GFPR. The segment at 122 to 159 is LID; sequence GRRVHPASGRVYHLQYNPPQNDGKDDETGEDLVIRADD. Residues arginine 123 and 132–133 each bind ATP; that span reads VY. AMP is bound by residues arginine 156 and arginine 167. Residue lysine 200 coordinates ATP.

It belongs to the adenylate kinase family. Monomer.

Its subcellular location is the cytoplasm. The catalysed reaction is AMP + ATP = 2 ADP. The protein operates within purine metabolism; AMP biosynthesis via salvage pathway; AMP from ADP: step 1/1. Catalyzes the reversible transfer of the terminal phosphate group between ATP and AMP. Plays an important role in cellular energy homeostasis and in adenine nucleotide metabolism. This chain is Adenylate kinase, found in Pseudoalteromonas atlantica (strain T6c / ATCC BAA-1087).